The sequence spans 145 residues: MRAVIQRVRHAGVDVDARTTGAIEQGLMVLVGVAPDDTQTRADKMLHKLLGLRVFSDEAGKMNLNVQQVEGGLLLVPQFTLMANTTKGLRPGFDGAAPPAHGEALFDYLVAQARHAWPYVATGEFGADMQVSLLNDGPVTFIVET.

The short motif at 137–138 (GP) is the Gly-cisPro motif, important for rejection of L-amino acids element.

This sequence belongs to the DTD family. In terms of assembly, homodimer.

The protein localises to the cytoplasm. It carries out the reaction glycyl-tRNA(Ala) + H2O = tRNA(Ala) + glycine + H(+). The catalysed reaction is a D-aminoacyl-tRNA + H2O = a tRNA + a D-alpha-amino acid + H(+). Functionally, an aminoacyl-tRNA editing enzyme that deacylates mischarged D-aminoacyl-tRNAs. Also deacylates mischarged glycyl-tRNA(Ala), protecting cells against glycine mischarging by AlaRS. Acts via tRNA-based rather than protein-based catalysis; rejects L-amino acids rather than detecting D-amino acids in the active site. By recycling D-aminoacyl-tRNA to D-amino acids and free tRNA molecules, this enzyme counteracts the toxicity associated with the formation of D-aminoacyl-tRNA entities in vivo and helps enforce protein L-homochirality. This Chromohalobacter salexigens (strain ATCC BAA-138 / DSM 3043 / CIP 106854 / NCIMB 13768 / 1H11) protein is D-aminoacyl-tRNA deacylase.